Reading from the N-terminus, the 245-residue chain is Phosphoadenosine 5'-phosphosulfate reductase (245 aa).

C239 acts as the Nucleophile; cysteine thiosulfonate intermediate in catalysis.

It belongs to the PAPS reductase family. CysH subfamily.

The protein localises to the cytoplasm. It carries out the reaction [thioredoxin]-disulfide + sulfite + adenosine 3',5'-bisphosphate + 2 H(+) = [thioredoxin]-dithiol + 3'-phosphoadenylyl sulfate. Its pathway is sulfur metabolism; hydrogen sulfide biosynthesis; sulfite from sulfate: step 3/3. Its function is as follows. Catalyzes the formation of sulfite from phosphoadenosine 5'-phosphosulfate (PAPS) using thioredoxin as an electron donor. The polypeptide is Phosphoadenosine 5'-phosphosulfate reductase (Alkalilimnicola ehrlichii (strain ATCC BAA-1101 / DSM 17681 / MLHE-1)).